Here is a 122-residue protein sequence, read N- to C-terminus: UPF0102 protein Smed_3545 (122 aa).

The protein belongs to the UPF0102 family.

This Sinorhizobium medicae (strain WSM419) (Ensifer medicae) protein is UPF0102 protein Smed_3545.